Here is a 176-residue protein sequence, read N- to C-terminus: Translation initiation factor IF-3 (176 aa).

It belongs to the IF-3 family. Monomer.

Its subcellular location is the cytoplasm. Its function is as follows. IF-3 binds to the 30S ribosomal subunit and shifts the equilibrium between 70S ribosomes and their 50S and 30S subunits in favor of the free subunits, thus enhancing the availability of 30S subunits on which protein synthesis initiation begins. The chain is Translation initiation factor IF-3 from Streptococcus agalactiae serotype Ia (strain ATCC 27591 / A909 / CDC SS700).